The following is a 79-amino-acid chain: Ixosin (79 aa).

Positions 1–56 (MSAHKVQIGLSSGQFRVALQVPSVRLKGLGSFHTGSIVLPSQGSLREDQISLHNQD) are cleaved as a propeptide — removed in mature form.

Has antifungal activity against C.albicans. Has antibacterial activity against the Gram-positive bacterium S.aureus and the Gram-negative bacterium E.coli. Lacks hemolytic activity against rabbit erythrocytes. This Ixodes sinensis (Hard tick) protein is Ixosin.